Here is a 193-residue protein sequence, read N- to C-terminus: Bcl-2-binding component 3, isoforms 1/2 (193 aa).

2 disordered regions span residues 1–28 (MARA…FPLG) and 71–138 (ALGG…REIG). A Phosphoserine modification is found at Ser-10. Residues 71-82 (ALGGSRWPGGPR) show a composition bias toward low complexity. A BH3 motif is present at residues 137-151 (IGAQLRRMADDLNAQ).

It belongs to the Bcl-2 family. As to quaternary structure, interacts with MCL1 and BCL2A1. Interacts (via BH3 domain) with BCL2. Interacts with BCL2L1/BCL-XL. Interacts (via BH3 domain) with NOL3/ARC (via CARD domain); this interaction prevents BBC3 association with BCL2 and results in CASP8 activation. In terms of tissue distribution, ubiquitously expressed.

Its subcellular location is the mitochondrion. Its function is as follows. Essential mediator of p53/TP53-dependent and p53/TP53-independent apoptosis. Promotes partial unfolding of BCL2L1 and dissociation of BCL2L1 from p53/TP53, releasing the bound p53/TP53 to induce apoptosis. Regulates ER stress-induced neuronal apoptosis. This chain is Bcl-2-binding component 3, isoforms 1/2 (BBC3), found in Homo sapiens (Human).